A 650-amino-acid chain; its full sequence is Pentatricopeptide repeat-containing protein At1g51965, mitochondrial (650 aa).

The transit peptide at 1 to 23 (MKLLRRRFFNSVNTITRPNRRHY) directs the protein to the mitochondrion. PPR repeat units lie at residues 132-169 (DPFL…NVHG), 170-200 (NIST…WDLK), 202-236 (NSFT…GHKL), 237-267 (DIFA…RHCR), 269-303 (DEYT…GLTL), 304-338 (NVVG…GCRP), 339-369 (NEYT…SKRY), 371-405 (TQGI…PVKG), 406-440 (ERDS…GVVT), 441-475 (DTMM…GPSP), 476-510 (DIFT…DCKP), 511-545 (DIIS…GLNP), 546-580 (DVVT…GCQP), and 581-615 (NIVT…GLTP).

This sequence belongs to the PPR family. P subfamily.

The protein localises to the mitochondrion. The chain is Pentatricopeptide repeat-containing protein At1g51965, mitochondrial from Arabidopsis thaliana (Mouse-ear cress).